Here is a 263-residue protein sequence, read N- to C-terminus: Endonuclease 8 (263 aa).

The active-site Schiff-base intermediate with DNA is P2. The active-site Proton donor is the E3. K53 functions as the Proton donor; for beta-elimination activity in the catalytic mechanism. Residues Q70, R125, and N169 each coordinate DNA. The segment at K229–H263 adopts an FPG-type zinc-finger fold. The active-site Proton donor; for delta-elimination activity is the R253.

The protein belongs to the FPG family. It depends on Zn(2+) as a cofactor.

The enzyme catalyses 2'-deoxyribonucleotide-(2'-deoxyribose 5'-phosphate)-2'-deoxyribonucleotide-DNA = a 3'-end 2'-deoxyribonucleotide-(2,3-dehydro-2,3-deoxyribose 5'-phosphate)-DNA + a 5'-end 5'-phospho-2'-deoxyribonucleoside-DNA + H(+). Its function is as follows. Involved in base excision repair of DNA damaged by oxidation or by mutagenic agents. Acts as a DNA glycosylase that recognizes and removes damaged bases. Has a preference for oxidized pyrimidines, such as thymine glycol, 5,6-dihydrouracil and 5,6-dihydrothymine. Has AP (apurinic/apyrimidinic) lyase activity and introduces nicks in the DNA strand. Cleaves the DNA backbone by beta-delta elimination to generate a single-strand break at the site of the removed base with both 3'- and 5'-phosphates. This is Endonuclease 8 from Klebsiella pneumoniae subsp. pneumoniae (strain ATCC 700721 / MGH 78578).